Here is an 87-residue protein sequence, read N- to C-terminus: UPF0237 protein YjhC (87 aa).

The ACT domain occupies 4–76; sequence VVTVVGADKI…EALGVNIHVQ (73 aa).

The protein belongs to the UPF0237 family.

The sequence is that of UPF0237 protein YjhC (yjhC) from Lactococcus lactis subsp. lactis (strain IL1403) (Streptococcus lactis).